A 1485-amino-acid polypeptide reads, in one-letter code: Chromosome partition protein MukB (1485 aa).

34–41 is an ATP binding site; sequence GGNGAGKS. Coiled coils occupy residues 311-480 and 519-665; these read EMAR…EAYR and GARL…RLSQ. Residues 666–783 form a flexible hinge region; it reads PGGAEDARLI…SLPLFGRAAR (118 aa). Coiled coils occupy residues 832-1115 and 1209-1265; these read NDPE…QAKA and IDAI…LQSV.

This sequence belongs to the SMC family. MukB subfamily. Homodimerization via its hinge domain. Binds to DNA via its C-terminal region. Interacts, and probably forms a ternary complex, with MukE and MukF via its C-terminal region. The complex formation is stimulated by calcium or magnesium. Interacts with tubulin-related protein FtsZ.

It is found in the cytoplasm. The protein resides in the nucleoid. Functionally, plays a central role in chromosome condensation, segregation and cell cycle progression. Functions as a homodimer, which is essential for chromosome partition. Involved in negative DNA supercoiling in vivo, and by this means organize and compact chromosomes. May achieve or facilitate chromosome segregation by condensation DNA from both sides of a centrally located replisome during cell division. The polypeptide is Chromosome partition protein MukB (Edwardsiella ictaluri (strain 93-146)).